The primary structure comprises 380 residues: GATOR1 complex protein NPRL2 (380 aa).

An interaction with PDPK1 region spans residues 1–133; that stretch reads MGSGCRIECI…SKQKLVPIMT (133 aa). Arg78 is a GDP binding site. Arg78 carries the asymmetric dimethylarginine modification. Glycyl lysine isopeptide (Lys-Gly) (interchain with G-Cter in ubiquitin) cross-links involve residues Lys158 and Lys357.

Belongs to the NPR2 family. As to quaternary structure, within the GATOR complex, component of the GATOR1 subcomplex, made of DEPDC5, NPRL2 and NPRL3. GATOR1 mediates the strong interaction of the GATOR complex with small GTPases Rag (RagA/RRAGA, RagB/RRAGB, RagC/RRAGC and/or RagD/RRAGD) heterodimers. GATOR1 interacts with GPR155/LYCHOS; interaction takes place in presence of cholesterol and prevents interaction between GATOR1 and KICSTOR. Interacts with PDPK1. In the presence of abundant amino acids, ubiquitinated at Lys-158 and Lys-357 via 'Lys-6'-linked ubiquitination by the WDR24 component of the GATOR2 complex, thereby inhibiting the GATOR1 complex and promoting mTORC1 activation. In terms of processing, asymmetric dimethylation at Arg-78 by PRMT1 inhibits the GTPase activator activity of the GATOR1 complex and consequently inducing timely mTORC1 activation under methionine-sufficient conditions. In terms of tissue distribution, most abundant in skeletal muscle, followed by brain, liver and pancreas, with lower amounts in lung, kidney, placenta and heart. Expressed in the frontal lobe cortex as well as in the temporal, parietal, and occipital lobes. Expressed in most lung cancer cell lines tested.

Its subcellular location is the lysosome membrane. Functionally, catalytic component of the GATOR1 complex, a multiprotein complex that functions as an inhibitor of the amino acid-sensing branch of the mTORC1 pathway. In response to amino acid depletion, the GATOR1 complex has GTPase activating protein (GAP) activity and strongly increases GTP hydrolysis by RagA/RRAGA (or RagB/RRAGB) within heterodimeric Rag complexes, thereby turning them into their inactive GDP-bound form, releasing mTORC1 from lysosomal surface and inhibiting mTORC1 signaling. In the presence of abundant amino acids, the GATOR1 complex is ubiquitinated and inhibited by GATOR2. Within the GATOR1 complex, NPRL2 constitutes the catalytic subunit that mediates the GTPase activator activity and under methionine-sufficient conditions, the GTPase activator activity is inhibited by PRMT1 through methylation and consequently inducing timely mTORC1 activation. Suppresses Src-dependent tyrosine phosphorylation and activation of PDPK1 and its downstream signaling. Down-regulates PDPK1 kinase activity by interfering with tyrosine phosphorylation at 'Tyr-9', 'Tyr-373' and 'Tyr-376' residues. May act as a tumor suppressor. Suppresses cell growth and enhances sensitivity to various anticancer drugs. The polypeptide is GATOR1 complex protein NPRL2 (Homo sapiens (Human)).